The following is a 371-amino-acid chain: Glycosyltransferase 8 domain-containing protein 1 (371 aa).

Over 1-7 the chain is Cytoplasmic; sequence MSFRKVN. A helical; Signal-anchor for type II membrane protein transmembrane segment spans residues 8–28; sequence IIIWVLAVVLFLLVLHHNFLS. The Lumenal portion of the chain corresponds to 29 to 371; it reads LSSLLKNDIS…RRHMDTSNIK (343 aa). A glycan (N-linked (GlcNAc...) asparagine) is linked at Asn257.

The protein belongs to the glycosyltransferase 8 family.

It localises to the membrane. The protein is Glycosyltransferase 8 domain-containing protein 1 (Glt8d1) of Mus musculus (Mouse).